Consider the following 1132-residue polypeptide: Phospholipid-transporting ATPase IG (1132 aa).

At 1–66 (MQMVPSLPPA…NFLPKNLFEQ (66 aa)) the chain is on the cytoplasmic side. The helical transmembrane segment at 67–85 (FRRIANFYFLIIFLVQVTV) threads the bilayer. Position 86 (aspartate 86) is a topological domain, extracellular. The chain crosses the membrane as a helical span at residues 87-107 (TPTSPVTSGLPLFFVITVTAI). At 108–290 (KQGYEDCLRH…SQKRSAVEKS (183 aa)) the chain is on the cytoplasmic side. Residues 291-311 (INAFLIVYLFILLTKAAVCTT) traverse the membrane as a helical segment. Residues 312–346 (LKYVWQSTPYNDEPWYNQKTQKERETLKVLKMFTD) lie on the Extracellular side of the membrane. A helical membrane pass occupies residues 347–367 (FLSFMVLFNFIIPVSMYVTVE). Over 368–879 (MQKFLGSFFI…YVRIAHLVQY (512 aa)) the chain is Cytoplasmic. Aspartate 412 acts as the 4-aspartylphosphate intermediate in catalysis. The ATP site is built by aspartate 412, lysine 413, and threonine 414. Position 412 (aspartate 412) interacts with Mg(2+). Threonine 414 provides a ligand contact to Mg(2+). Serine 445 carries the post-translational modification Phosphoserine. ATP-binding residues include glutamate 501, phenylalanine 543, lysine 566, arginine 597, threonine 677, glycine 678, aspartate 679, arginine 792, and lysine 798. Position 819 (aspartate 819) interacts with Mg(2+). Positions 822 and 823 each coordinate ATP. Aspartate 823 is a binding site for Mg(2+). Residues 880 to 900 (FFYKNLCFILPQFLYQFFCGF) form a helical membrane-spanning segment. The Extracellular segment spans residues 901-908 (SQQPLYDA). Residues 909–929 (AYLTMYNICFTSLPILAYSLL) traverse the membrane as a helical segment. Residues 930-955 (EQHINIDTLTSDPRLYMKISGNAMLQ) are Cytoplasmic-facing. The helical transmembrane segment at 956-976 (LGPFLYWTFLAAFEGTVFFFG) threads the bilayer. Topologically, residues 977–995 (TYFLFQTASLEENGKVYGN) are extracellular. The helical transmembrane segment at 996–1016 (WTFGTIVFTVLVFTVTLKLAL) threads the bilayer. The Cytoplasmic portion of the chain corresponds to 1017–1026 (DTRFWTWINH). The helical transmembrane segment at 1027-1047 (FVIWGSLAFYVFFSFFWGGII) threads the bilayer. Over 1048-1069 (WPFLKQQRMYFVFAQMLSSVST) the chain is Extracellular. The chain crosses the membrane as a helical span at residues 1070–1090 (WLAIILLIFISLFPEILLIVL). Residues 1091–1132 (KNVRRRSARRNLSCRRASDSLSARPSVRPLLLRTFSDESNVL) are Cytoplasmic-facing. Phosphoserine occurs at positions 1108, 1116, and 1126. Residues 1116 to 1121 (SVRPLL) carry the Di-leucine motif motif.

The protein belongs to the cation transport ATPase (P-type) (TC 3.A.3) family. Type IV subfamily. In terms of assembly, component of a P4-ATPase flippase complex which consists of a catalytic alpha subunit ATP11C and an accessory beta subunit TMEM30A. The cofactor is Mg(2+). Post-translationally, proteolytically cleaved by CASP3, CASP6 and CASP7. Phosphorylated at Ser-1116 likely by PRKCA; this creates a functional di-leucine motif that is sufficient for endocytosis. In terms of tissue distribution, widely expressed.

It is found in the cell membrane. It localises to the endoplasmic reticulum membrane. Its subcellular location is the early endosome membrane. The protein resides in the recycling endosome membrane. It carries out the reaction ATP + H2O + phospholipidSide 1 = ADP + phosphate + phospholipidSide 2.. It catalyses the reaction a 1,2-diacyl-sn-glycero-3-phospho-L-serine(out) + ATP + H2O = a 1,2-diacyl-sn-glycero-3-phospho-L-serine(in) + ADP + phosphate + H(+). The catalysed reaction is a 1,2-diacyl-sn-glycero-3-phosphoethanolamine(out) + ATP + H2O = a 1,2-diacyl-sn-glycero-3-phosphoethanolamine(in) + ADP + phosphate + H(+). Its activity is regulated as follows. The flippase activity is inactivated by caspase-mediated cleavage in apoptotic cells, allowing for PS exposure on the cell surface and engulfment of apoptotic cells by macrophages. The ATPase activity is up-regulated by aminophospholipids PS and PE and down-regulated by Increasing intracellular Ca2+ levels. Catalytic component of a P4-ATPase flippase complex which catalyzes the hydrolysis of ATP coupled to the transport of aminophospholipids, phosphatidylserines (PS) and phosphatidylethanolamines (PE), from the outer to the inner leaflet of the plasma membrane. Major PS-flippase in immune cell subsets. In erythrocyte plasma membrane, it is required to maintain PS in the inner leaflet preventing its exposure on the surface. This asymmetric distribution is critical for the survival of erythrocytes in circulation since externalized PS is a phagocytic signal for erythrocyte clearance by splenic macrophages. Required for B cell differentiation past the pro-B cell stage. Seems to mediate PS flipping in pro-B cells. May be involved in the transport of cholestatic bile acids. This is Phospholipid-transporting ATPase IG from Homo sapiens (Human).